Consider the following 316-residue polypeptide: MKIISAEQVHQNLNFEELIPLLKQSFSRPFSMPQRQVYSLAPEQSENHDAFALLPSWNEEVIGNKAFTYFPDNAKKHDLPGLFSKIMLFKRQTGEPLALVDGTSVTYWRTAAISALASQLLSRKNSQHLMLFGTGNLASYLVKAHLTVRDIKQVTLWGRNAKKVSKLIADFSILYPAVTFKTSVDVNAEVASADIICCATGAKTPLFDGNSVSAGCHIDCLGNHMTDARECDTTTILRARVFVDSLTNTLNEAGELLIPMAEDAFNKDEIVGELADMCKTPSMLRQSSDEITLFKSVGTAISDLVAAHSVVEKLAD.

The protein belongs to the ornithine cyclodeaminase/mu-crystallin family. In terms of assembly, homodimer.

The enzyme catalyses L-proline + NAD(+) = 1-pyrroline-2-carboxylate + NADH + H(+). It carries out the reaction L-proline + NADP(+) = 1-pyrroline-2-carboxylate + NADPH + H(+). Catalyzes the reduction of Delta(1)-pyrroline-2-carboxylate (Pyr2C) to L-proline, using preferentially NADPH over NADH as the electron donor. Together with LhpH, is involved in a metabolic pathway that converts trans-3-hydroxy-L-proline (t3LHyp) to L-proline. To a much lesser extent, can also reduce Delta(1)-piperideine-2-carboxylate (Pip2C) to L-pipecolate in vitro; however, this activity has likely no physiological significance in vivo since C.psychrerythraea probably possesses no ability to metabolize D-lysine via the L-pipecolate pathway. Does not show ornithine cyclodeaminase (OCD) activity. This Colwellia psychrerythraea (strain 34H / ATCC BAA-681) (Vibrio psychroerythus) protein is Delta(1)-pyrroline-2-carboxylate reductase.